The sequence spans 532 residues: GH3 domain-containing protein (532 aa).

The signal sequence occupies residues 1–18 (MLLLWLLLLLLLLVPLLA). Residues 100 to 123 (LTQTSHTQEQESEETLPSPASPQY) are disordered. Residues Asn-356 and Asn-451 are each glycosylated (N-linked (GlcNAc...) asparagine).

This sequence belongs to the GH3 family. In terms of tissue distribution, highly expressed in mammary tissues from mature virgins and at day 13 of pregnancy, and at lower level during lactation. Expressed at intermediate level in liver. Expressed at lower level in kidney, heart and brain.

The protein localises to the endoplasmic reticulum. Its subcellular location is the nucleus envelope. This chain is GH3 domain-containing protein (Ghdc), found in Mus musculus (Mouse).